The sequence spans 65 residues: Large ribosomal subunit protein uL30 (65 aa).

The protein belongs to the universal ribosomal protein uL30 family. In terms of assembly, part of the 50S ribosomal subunit.

The sequence is that of Large ribosomal subunit protein uL30 from Mycobacterium bovis (strain ATCC BAA-935 / AF2122/97).